Here is a 156-residue protein sequence, read N- to C-terminus: Ribosomal RNA large subunit methyltransferase H (156 aa).

Residues Leu73, Gly104, and 123 to 128 (LSALTL) each bind S-adenosyl-L-methionine.

The protein belongs to the RNA methyltransferase RlmH family. Homodimer.

The protein resides in the cytoplasm. The enzyme catalyses pseudouridine(1915) in 23S rRNA + S-adenosyl-L-methionine = N(3)-methylpseudouridine(1915) in 23S rRNA + S-adenosyl-L-homocysteine + H(+). Specifically methylates the pseudouridine at position 1915 (m3Psi1915) in 23S rRNA. This chain is Ribosomal RNA large subunit methyltransferase H, found in Shewanella woodyi (strain ATCC 51908 / MS32).